Here is a 90-residue protein sequence, read N- to C-terminus: Guanine nucleotide-binding protein subunit gamma (90 aa).

Cys86 carries the S-palmitoyl cysteine lipid modification. Residue Cys87 is modified to Cysteine methyl ester. Cys87 is lipidated: S-farnesyl cysteine. A propeptide spans 88-90 (TIM) (removed in mature form).

Belongs to the G protein gamma family. As to quaternary structure, g proteins are composed of 3 units, alpha, beta and gamma.

Its subcellular location is the membrane. The protein is Guanine nucleotide-binding protein subunit gamma of Kluyveromyces lactis (strain ATCC 8585 / CBS 2359 / DSM 70799 / NBRC 1267 / NRRL Y-1140 / WM37) (Yeast).